A 406-amino-acid polypeptide reads, in one-letter code: MASKRLETLCKSLTREVGRISSQTGRDDYDARRKVADIARELINETTHPSDVAAQYTINMAEMACLRMFQKWKLLDKIPASGSISYEDLSASINADKNLIARMGQMLVATGKLRQTSPSHVAHTRLSTAFAHRSPPAVWFSMSFDETLVPWTQWPRYFAKYGPRQPSGQTAVPMTFAEGADGELTCYEVIARGGPERMADFADGMQGIPELMPAAGIYDFAWVGEAVAEGEVDSDMPLIVDVGGNLGQALLEIIAHTESSIPPDRCVLQDRADVIAAADALDNPVLKKVRKMPVDYHQGQPLKGALIYYVRRCLHGFTDEVSIKLLKHLTAALPADPRARVLICEQITTTPPDPYTTMMDICMMNVGSKERSEDDFTNLVTAAGMKVIKFHRGEGVATHVIECARA.

Residues Asp270 and Arg312 each coordinate S-adenosyl-L-methionine. His315 acts as the Proton acceptor in catalysis.

Belongs to the class I-like SAM-binding methyltransferase superfamily. Cation-independent O-methyltransferase family.

The protein operates within secondary metabolite biosynthesis; flavonoid biosynthesis. Its function is as follows. Methyltransferase; part of the gene cluster that mediates the biosynthesis of chlorflavonin, a fungal flavonoid with acetolactate synthase inhibitory activity. Within the pathway, cfoD is responsible for the methylation at position C3-OH of flavonoid. The pathway begins with the PKS-NRPS hybrid synthetase cfoA that uses benzoic acid or p-hydroxybenzoic acid as a starter unit with four rounds of chain elongation using malonyl-CoA to form the chalcone skeleton. Then, a new type of chalcone isomerase, cfoK, catalyzes the conversion of the chalcone into a flavanone by a histidine-mediated oxa-Michael addition mechanism. The desaturation of flavanone to flavone is catalyzed by a new type of flavone synthase, the flavin mononucleotide (FMN)-dependent oxidoreductase cfoJ. Monooxygenases cfoF, cfoG, and P450 cfoH are responsible for the hydroxylation of the flavonoid skeleton at sites C3, C8, and C2', respectively. Like cfoF, the dehydratase cfoI also plays a role in the hydroxylation of position C3. Methyltransferases cfoB, cfoC, and cfoD then catalyze the methylation of C7-OH, C8-OH, and C3-OH, respectively. Finally, the monooxygenase cfoE is responsible for the chlorination of flavonoid at position C3'. In Aspergillus candidus, this protein is Methyltransferase cfoD.